The primary structure comprises 460 residues: UDP-N-acetylmuramoylalanine--D-glutamate ligase (460 aa).

Residue 120–126 (GSNGKTT) coordinates ATP.

Belongs to the MurCDEF family.

The protein resides in the cytoplasm. The catalysed reaction is UDP-N-acetyl-alpha-D-muramoyl-L-alanine + D-glutamate + ATP = UDP-N-acetyl-alpha-D-muramoyl-L-alanyl-D-glutamate + ADP + phosphate + H(+). Its pathway is cell wall biogenesis; peptidoglycan biosynthesis. Functionally, cell wall formation. Catalyzes the addition of glutamate to the nucleotide precursor UDP-N-acetylmuramoyl-L-alanine (UMA). This is UDP-N-acetylmuramoylalanine--D-glutamate ligase from Lactobacillus delbrueckii subsp. bulgaricus (strain ATCC 11842 / DSM 20081 / BCRC 10696 / JCM 1002 / NBRC 13953 / NCIMB 11778 / NCTC 12712 / WDCM 00102 / Lb 14).